Reading from the N-terminus, the 700-residue chain is Tectonic-2 (700 aa).

A signal peptide spans 1–25 (MGSLSPLSFLWGLLLLQGVLRPLRG). Over 26–665 (DPVFIPPFIR…YYQGEPRPQC (640 aa)) the chain is Extracellular. N-linked (GlcNAc...) asparagine glycosylation is found at Asn76, Asn82, Asn146, Asn156, and Asn389. The chain crosses the membrane as a helical span at residues 666–682 (VAKGLMLLSLLMLAILL). At 683–700 (RHPWVGMCKAWSSASIQH) the chain is on the cytoplasmic side.

The protein belongs to the tectonic family. As to quaternary structure, part of the tectonic-like complex (also named B9 complex).

The protein localises to the membrane. The protein resides in the cytoplasm. It localises to the cytoskeleton. It is found in the cilium basal body. Functionally, component of the tectonic-like complex, a complex localized at the transition zone of primary cilia and acting as a barrier that prevents diffusion of transmembrane proteins between the cilia and plasma membranes. Required for hedgehog signaling transduction. The polypeptide is Tectonic-2 (Tctn2) (Rattus norvegicus (Rat)).